The chain runs to 448 residues: Chromosomal replication initiator protein DnaA (448 aa).

The interval 1-72 (MPDLQELWNY…VEGAYEFAEI (72 aa)) is domain I, interacts with DnaA modulators. Residues 72–110 (IELTPIFVLPGESDNLTPLEPEEEHVLTKAETPTFLRET) are domain II. The domain III, AAA+ region stretch occupies residues 111 to 327 (HLNSKYTFDT…GALVRVQAYA (217 aa)). ATP contacts are provided by Gly155, Gly157, Lys158, and Thr159. The domain IV, binds dsDNA stretch occupies residues 328 to 448 (TMQNAEITTS…ILDLKNTMKS (121 aa)).

It belongs to the DnaA family. As to quaternary structure, oligomerizes as a right-handed, spiral filament on DNA at oriC.

It localises to the cytoplasm. Its function is as follows. Plays an essential role in the initiation and regulation of chromosomal replication. ATP-DnaA binds to the origin of replication (oriC) to initiate formation of the DNA replication initiation complex once per cell cycle. Binds the DnaA box (a 9 base pair repeat at the origin) and separates the double-stranded (ds)DNA. Forms a right-handed helical filament on oriC DNA; dsDNA binds to the exterior of the filament while single-stranded (ss)DNA is stabiized in the filament's interior. The ATP-DnaA-oriC complex binds and stabilizes one strand of the AT-rich DNA unwinding element (DUE), permitting loading of DNA polymerase. After initiation quickly degrades to an ADP-DnaA complex that is not apt for DNA replication. Binds acidic phospholipids. In Latilactobacillus sakei subsp. sakei (strain 23K) (Lactobacillus sakei subsp. sakei), this protein is Chromosomal replication initiator protein DnaA.